The primary structure comprises 905 residues: Core protein VP3 (905 aa).

It belongs to the orbivirus VP3 family.

It is found in the virion. In terms of biological role, the VP3 protein is one of the five proteins (with VP1, VP4, VP6 and VP7) which form the inner capsid of the virus. The chain is Core protein VP3 (Segment-3) from African horse sickness virus (AHSV).